Reading from the N-terminus, the 314-residue chain is Secreted frizzled-related protein 5 (314 aa).

A signal peptide spans 1–21; the sequence is MWVAWSARTAALALLLGALHG. An FZ domain is found at 45-162; the sequence is SKPPQCLDIP…PLDNDLCIAV (118 aa). Cystine bridges form between cysteine 50/cysteine 113, cysteine 60/cysteine 106, cysteine 97/cysteine 132, cysteine 121/cysteine 159, cysteine 125/cysteine 149, cysteine 178/cysteine 250, cysteine 181/cysteine 252, and cysteine 195/cysteine 300. The 123-residue stretch at 178-300 folds into the NTR domain; the sequence is CAQCEMEHSA…AVKFMFSYPC (123 aa).

Belongs to the secreted frizzled-related protein (sFRP) family.

It is found in the secreted. Soluble frizzled-related proteins (sFRPS) function as modulators of Wnt signaling through direct interaction with Wnts. They have a role in regulating cell growth and differentiation in specific cell types. SFRP5 may be involved in determining the polarity of photoreceptor, and perhaps, other cells in the retina. This is Secreted frizzled-related protein 5 (Sfrp5) from Mus musculus (Mouse).